Consider the following 248-residue polypeptide: Cytochrome c oxidase subunit 2 (248 aa).

Residues 1–36 (MLFFNSILNDAPSSWALYFQDGASPSYLGVTHLNDY) are Mitochondrial intermembrane-facing. A helical transmembrane segment spans residues 37–57 (LMFYLTFIFIGVIYAICKAVI). At 58-75 (EYNYNSHPIAAKYTTHGS) the chain is on the mitochondrial matrix side. Residues 76 to 100 (IVEFIWTLIPALILILVALPSFKLL) traverse the membrane as a helical segment. The Mitochondrial intermembrane portion of the chain corresponds to 101–248 (YLLDEVQKPS…DFLAWLEENS (148 aa)). The Cu cation site is built by His-182, Cys-217, Glu-219, Cys-221, His-225, and Met-228. Glu-219 is a Mg(2+) binding site.

Belongs to the cytochrome c oxidase subunit 2 family. In terms of assembly, component of the cytochrome c oxidase (complex IV, CIV), a multisubunit enzyme composed of a catalytic core of 3 subunits and several supernumerary subunits. The complex exists as a monomer or a dimer and forms supercomplexes (SCs) in the inner mitochondrial membrane with ubiquinol-cytochrome c oxidoreductase (cytochrome b-c1 complex, complex III, CIII). The cofactor is Cu cation.

Its subcellular location is the mitochondrion inner membrane. It catalyses the reaction 4 Fe(II)-[cytochrome c] + O2 + 8 H(+)(in) = 4 Fe(III)-[cytochrome c] + 2 H2O + 4 H(+)(out). Functionally, component of the cytochrome c oxidase, the last enzyme in the mitochondrial electron transport chain which drives oxidative phosphorylation. The respiratory chain contains 3 multisubunit complexes succinate dehydrogenase (complex II, CII), ubiquinol-cytochrome c oxidoreductase (cytochrome b-c1 complex, complex III, CIII) and cytochrome c oxidase (complex IV, CIV), that cooperate to transfer electrons derived from NADH and succinate to molecular oxygen, creating an electrochemical gradient over the inner membrane that drives transmembrane transport and the ATP synthase. Cytochrome c oxidase is the component of the respiratory chain that catalyzes the reduction of oxygen to water. Electrons originating from reduced cytochrome c in the intermembrane space (IMS) are transferred via the dinuclear copper A center (CU(A)) of subunit 2 and heme A of subunit 1 to the active site in subunit 1, a binuclear center (BNC) formed by heme A3 and copper B (CU(B)). The BNC reduces molecular oxygen to 2 water molecules using 4 electrons from cytochrome c in the IMS and 4 protons from the mitochondrial matrix. The polypeptide is Cytochrome c oxidase subunit 2 (cox2) (Schizosaccharomyces pombe (strain 972 / ATCC 24843) (Fission yeast)).